The chain runs to 155 residues: Small ribosomal subunit protein uS7 (155 aa).

Belongs to the universal ribosomal protein uS7 family. In terms of assembly, part of the 30S ribosomal subunit. Contacts proteins S9 and S11.

In terms of biological role, one of the primary rRNA binding proteins, it binds directly to 16S rRNA where it nucleates assembly of the head domain of the 30S subunit. Is located at the subunit interface close to the decoding center, probably blocks exit of the E-site tRNA. In Corynebacterium efficiens (strain DSM 44549 / YS-314 / AJ 12310 / JCM 11189 / NBRC 100395), this protein is Small ribosomal subunit protein uS7.